The primary structure comprises 145 residues: Ribosome maturation factor RimP (145 aa).

This sequence belongs to the RimP family.

It localises to the cytoplasm. In terms of biological role, required for maturation of 30S ribosomal subunits. The protein is Ribosome maturation factor RimP of Borreliella afzelii (strain PKo) (Borrelia afzelii).